Consider the following 492-residue polypeptide: High-affinity nickel transport protein (492 aa).

Residues 1-24 lie on the Cytoplasmic side of the membrane; sequence MLSRWTRRVNESRLAQRKLTLLGR. A helical transmembrane segment spans residues 25 to 45; it reads AIALVVGELLFNAVCWIAAGI. At 46-50 the chain is on the extracellular side; the sequence is CFGKT. A helical membrane pass occupies residues 51 to 71; it reads DGILGLALLAWTIGLRHGLDA. The Cytoplasmic segment spans residues 72 to 94; that stretch reads DHISAIDNATRQLVSQGQLPITC. The chain crosses the membrane as a helical span at residues 95–115; that stretch reads GLFFSLGHSTIVIVVNVAIAV. The Extracellular segment spans residues 116–136; sequence SVDIYDKLDRVGSIGGIVGAA. The chain crosses the membrane as a helical span at residues 137–157; the sequence is VSASFLFLIACLNIYFLVGAI. Topologically, residues 158-210 are cytoplasmic; sequence KQRRSMKRRQALGLPPDEDEGDPSKIYGGGCMVRVVGPILRAVDRPWKMYPVG. A helical transmembrane segment spans residues 211–231; that stretch reads VLFGFGFDTASSIALLAISAI. The Extracellular segment spans residues 232-239; that stretch reads AQRGPNGD. The helical transmembrane segment at 240-260 threads the bilayer; it reads AISHGKIVILPFLFTAGMSLV. Over 261–382 the chain is Cytoplasmic; it reads DSLDSILMLY…AKANTMSSLS (122 aa). A helical membrane pass occupies residues 383–403; sequence IILTLLSILVALSISLIEIMG. Residues 404–439 lie on the Extracellular side of the membrane; that stretch reads LIGDNCTQCQDAANDPDGGGLAGSWWRAWARANDQS. Asn408 carries an N-linked (GlcNAc...) asparagine glycan. The helical transmembrane segment at 440–460 threads the bilayer; the sequence is GYIGAAIVGCFAAILAGWYGA. At 461–492 the chain is on the cytoplasmic side; it reads KWGKKKWKARRDANAAIVLEDNEDDAAETPVA.

This sequence belongs to the NiCoT transporter (TC 2.A.52) family.

Its subcellular location is the cell membrane. In terms of biological role, high-affinity nickel-specific transporter responsible for nickel uptake and required for high levels of activity of urease URE1. Does not transport cobalt. Plays a role in host brain invasion. The polypeptide is High-affinity nickel transport protein (Cryptococcus neoformans var. grubii serotype A (strain H99 / ATCC 208821 / CBS 10515 / FGSC 9487) (Filobasidiella neoformans var. grubii)).